A 517-amino-acid chain; its full sequence is Cytochrome P450 monooxygenase penP (517 aa).

Residues glycine 17–proline 37 form a helical membrane-spanning segment. Cysteine 456 contributes to the heme binding site. The N-linked (GlcNAc...) asparagine glycan is linked to asparagine 501.

Belongs to the cytochrome P450 family. The cofactor is heme.

The protein resides in the membrane. It functions in the pathway secondary metabolite biosynthesis. In terms of biological role, cytochrome P450 monooxygenase; part of the gene cluster that mediates the biosynthesis of the indole diterpenes penitrems. The geranylgeranyl diphosphate (GGPP) synthase penG catalyzes the first step in penitrem biosynthesis via conversion of farnesyl pyrophosphate and isopentyl pyrophosphate into geranylgeranyl pyrophosphate (GGPP). Condensation of indole-3-glycerol phosphate with GGPP by the prenyl transferase penC then forms 3-geranylgeranylindole (3-GGI). Epoxidation by the FAD-dependent monooxygenase penM leads to a epoxidized-GGI that is substrate of the terpene cyclase penB for cyclization to yield paspaline. Paspaline is subsequently converted to 13-desoxypaxilline by the cytochrome P450 monooxygenase penP, the latter being then converted to paxilline by the cytochrome P450 monooxygenase penQ. Paxilline is converted to beta-paxitriol via C-10 ketoreduction by the short-chain dehydrogenase PC-15 which can be monoprenylated at the C-20 by the indole diterpene prenyltransferase penD. A two-step elimination (acetylation and elimination) process performed by the O-acetyltransferase PC-16 and the P.simplicissimum ptmI-ortholog not yet identified in P.crustosum, leads to the production of the prenylated form of penijanthine. The FAD-linked oxidoreductase ptmO then converts the prenylated form of penijanthine into PC-M5 which is in turn transformed into PC-M4 by the aromatic dimethylallyltransferase PC-22. A series of oxidation steps involving 4 cytochrome P450 monooxygenases (PC-21, PC-05, PC-23, PC-20) and a FAD-dependent monooxygenase (PC-14) are required for the transformation of PC-M4 to penitrems A and E. Synthesis of these final products is proposed to proceed via penitrems D and C (PC-21, PC-05, PC-14) and penitrems B and F (PC-21, PC-05, PC-14, PC-23). The sequence is that of Cytochrome P450 monooxygenase penP from Penicillium crustosum (Blue mold fungus).